The sequence spans 149 residues: D-aminoacyl-tRNA deacylase (149 aa).

Positions 137 to 138 (GP) match the Gly-cisPro motif, important for rejection of L-amino acids motif.

The protein belongs to the DTD family. In terms of assembly, homodimer.

Its subcellular location is the cytoplasm. The catalysed reaction is glycyl-tRNA(Ala) + H2O = tRNA(Ala) + glycine + H(+). It catalyses the reaction a D-aminoacyl-tRNA + H2O = a tRNA + a D-alpha-amino acid + H(+). In terms of biological role, an aminoacyl-tRNA editing enzyme that deacylates mischarged D-aminoacyl-tRNAs. Also deacylates mischarged glycyl-tRNA(Ala), protecting cells against glycine mischarging by AlaRS. Acts via tRNA-based rather than protein-based catalysis; rejects L-amino acids rather than detecting D-amino acids in the active site. By recycling D-aminoacyl-tRNA to D-amino acids and free tRNA molecules, this enzyme counteracts the toxicity associated with the formation of D-aminoacyl-tRNA entities in vivo and helps enforce protein L-homochirality. In Paracoccus denitrificans (strain Pd 1222), this protein is D-aminoacyl-tRNA deacylase.